The primary structure comprises 112 residues: Large ribosomal subunit protein uL24 (112 aa).

The interval 92–112 is disordered; the sequence is ERDGKQKTVRVRVSKSTGKDL.

Belongs to the universal ribosomal protein uL24 family. As to quaternary structure, part of the 50S ribosomal subunit.

In terms of biological role, one of two assembly initiator proteins, it binds directly to the 5'-end of the 23S rRNA, where it nucleates assembly of the 50S subunit. Its function is as follows. One of the proteins that surrounds the polypeptide exit tunnel on the outside of the subunit. The chain is Large ribosomal subunit protein uL24 from Kocuria rhizophila (strain ATCC 9341 / DSM 348 / NBRC 103217 / DC2201).